The primary structure comprises 507 residues: Zinc finger CCCH-type with G patch domain-containing protein (507 aa).

The residue at position 1 (Met1) is an N-acetylmethionine. The interval 88 to 125 (PVDPGNDSKTVPGSEVQPTPTSSALEEEEEDPDLEDLS) is disordered. Residues 94–111 (DSKTVPGSEVQPTPTSSA) are compositionally biased toward polar residues. A compositionally biased stretch (acidic residues) spans 112–123 (LEEEEEDPDLED). The segment at 170-196 (KSLKPCPFFLEGKCRFKENCRFSHGQL) adopts a C3H1-type zinc-finger fold. Positions 264-283 (LRTEATDSSDSDTGDASDSS) are disordered. Phosphoserine is present on Ser272. Thr276 bears the Phosphothreonine mark. Residues 309–355 (TRGIGSKLLVKMGYEFGKGLGRHAEGRVEPIHAVVLPRGKSLDQCAE) form the G-patch domain. Position 349 is a phosphoserine (Ser349). Disordered regions lie at residues 359–389 (KKTK…PPRN) and 486–507 (AQEA…MTEF). Positions 487-507 (QEADLQRKQRKADTHRKMTEF) are enriched in basic and acidic residues.

Interacts with CHD4/Mi-2; the interaction is direct.

It is found in the nucleus. In terms of biological role, transcription repressor that specifically binds the 5'-GGAG[GA]A[GA]A-3' consensus sequence. Represses transcription by recruiting the chromatin multiprotein complex NuRD to target promoters. Negatively regulates expression of EGFR, a gene involved in cell proliferation, survival and migration. Its ability to repress genes of the EGFR pathway suggest it may act as a tumor suppressor. This chain is Zinc finger CCCH-type with G patch domain-containing protein (Zgpat), found in Rattus norvegicus (Rat).